A 92-amino-acid polypeptide reads, in one-letter code: Small ribosomal subunit protein uS17 (92 aa).

Belongs to the universal ribosomal protein uS17 family. In terms of assembly, part of the 30S ribosomal subunit.

Functionally, one of the primary rRNA binding proteins, it binds specifically to the 5'-end of 16S ribosomal RNA. In Cupriavidus pinatubonensis (strain JMP 134 / LMG 1197) (Cupriavidus necator (strain JMP 134)), this protein is Small ribosomal subunit protein uS17.